The chain runs to 322 residues: Methionyl-tRNA formyltransferase (322 aa).

112–115 contacts (6S)-5,6,7,8-tetrahydrofolate; the sequence is SLLP.

It belongs to the Fmt family.

The catalysed reaction is L-methionyl-tRNA(fMet) + (6R)-10-formyltetrahydrofolate = N-formyl-L-methionyl-tRNA(fMet) + (6S)-5,6,7,8-tetrahydrofolate + H(+). In terms of biological role, attaches a formyl group to the free amino group of methionyl-tRNA(fMet). The formyl group appears to play a dual role in the initiator identity of N-formylmethionyl-tRNA by promoting its recognition by IF2 and preventing the misappropriation of this tRNA by the elongation apparatus. The protein is Methionyl-tRNA formyltransferase of Synechococcus sp. (strain JA-2-3B'a(2-13)) (Cyanobacteria bacterium Yellowstone B-Prime).